Here is a 495-residue protein sequence, read N- to C-terminus: Probable staphylococcal-like nuclease CAN4 (495 aa).

A lipid anchor (N-myristoyl glycine) is attached at G2. The S-palmitoyl cysteine moiety is linked to residue C11. Disordered regions lie at residues 45–68 (DLQV…RPAL) and 81–101 (LQVP…PPRP). The span at 50–66 (LSPPPPSTRQQQPPPRP) shows a compositional bias: pro residues. One can recognise a TNase-like domain in the interval 297 to 470 (KTLPVNAKCI…RDARQGLWAY (174 aa)). Residue D310 participates in Ca(2+) binding. R377 is an active-site residue. Ca(2+) is bound at residue D382. Catalysis depends on residues E385 and R419.

Belongs to the thermonuclease family. It depends on Ca(2+) as a cofactor.

It is found in the cell membrane. In terms of biological role, enzyme that catalyzes the hydrolysis of both DNA and RNA at the 5' position of the phosphodiester bond. In Oryza sativa subsp. japonica (Rice), this protein is Probable staphylococcal-like nuclease CAN4.